The primary structure comprises 374 residues: S-adenosylmethionine:tRNA ribosyltransferase-isomerase (374 aa).

The protein belongs to the QueA family. As to quaternary structure, monomer.

It is found in the cytoplasm. It carries out the reaction 7-aminomethyl-7-carbaguanosine(34) in tRNA + S-adenosyl-L-methionine = epoxyqueuosine(34) in tRNA + adenine + L-methionine + 2 H(+). It functions in the pathway tRNA modification; tRNA-queuosine biosynthesis. In terms of biological role, transfers and isomerizes the ribose moiety from AdoMet to the 7-aminomethyl group of 7-deazaguanine (preQ1-tRNA) to give epoxyqueuosine (oQ-tRNA). The polypeptide is S-adenosylmethionine:tRNA ribosyltransferase-isomerase (Prochlorococcus marinus (strain MIT 9301)).